A 559-amino-acid polypeptide reads, in one-letter code: DNA primase (559 aa).

A CHC2-type zinc finger spans residues 37-61 (CPFHEERSASFSVNQVKGFYYCFGC). Positions 246–327 (KQVIVTEGYL…KGGVILFENN (82 aa)) constitute a Toprim domain. Positions 252, 296, and 298 each coordinate Mg(2+).

This sequence belongs to the DnaG primase family. In terms of assembly, monomer. Interacts with DnaB. Requires Zn(2+) as cofactor. Mg(2+) is required as a cofactor.

It catalyses the reaction ssDNA + n NTP = ssDNA/pppN(pN)n-1 hybrid + (n-1) diphosphate.. In terms of biological role, RNA polymerase that catalyzes the synthesis of short RNA molecules used as primers for DNA polymerase during DNA replication. This chain is DNA primase, found in Helicobacter pylori (strain J99 / ATCC 700824) (Campylobacter pylori J99).